Reading from the N-terminus, the 200-residue chain is Adenylyl-sulfate kinase (200 aa).

36-43 (GLSGSGKS) serves as a coordination point for ATP. The active-site Phosphoserine intermediate is the S110.

The protein belongs to the APS kinase family.

The enzyme catalyses adenosine 5'-phosphosulfate + ATP = 3'-phosphoadenylyl sulfate + ADP + H(+). It functions in the pathway sulfur metabolism; hydrogen sulfide biosynthesis; sulfite from sulfate: step 2/3. In terms of biological role, catalyzes the synthesis of activated sulfate. This is Adenylyl-sulfate kinase from Clostridium acetobutylicum (strain ATCC 824 / DSM 792 / JCM 1419 / IAM 19013 / LMG 5710 / NBRC 13948 / NRRL B-527 / VKM B-1787 / 2291 / W).